The chain runs to 124 residues: Small ribosomal subunit protein uS12 (124 aa).

The tract at residues 1 to 32 (MPTINQLVRKGRRDKTAKVKTAALKGSPQRRG) is disordered. Aspartate 89 is subject to 3-methylthioaspartic acid. The tract at residues 104 to 124 (TQGVKGRKQARSRYGAKKEKS) is disordered. Positions 108–118 (KGRKQARSRYG) are enriched in basic residues.

It belongs to the universal ribosomal protein uS12 family. Part of the 30S ribosomal subunit. Contacts proteins S8 and S17. May interact with IF1 in the 30S initiation complex.

Its function is as follows. With S4 and S5 plays an important role in translational accuracy. Functionally, interacts with and stabilizes bases of the 16S rRNA that are involved in tRNA selection in the A site and with the mRNA backbone. Located at the interface of the 30S and 50S subunits, it traverses the body of the 30S subunit contacting proteins on the other side and probably holding the rRNA structure together. The combined cluster of proteins S8, S12 and S17 appears to hold together the shoulder and platform of the 30S subunit. The polypeptide is Small ribosomal subunit protein uS12 (Rhodococcus erythropolis (strain PR4 / NBRC 100887)).